The sequence spans 221 residues: Large ribosomal subunit protein uL4 (221 aa).

Positions threonine 48–serine 77 are disordered.

The protein belongs to the universal ribosomal protein uL4 family. Part of the 50S ribosomal subunit.

Its function is as follows. One of the primary rRNA binding proteins, this protein initially binds near the 5'-end of the 23S rRNA. It is important during the early stages of 50S assembly. It makes multiple contacts with different domains of the 23S rRNA in the assembled 50S subunit and ribosome. Forms part of the polypeptide exit tunnel. The polypeptide is Large ribosomal subunit protein uL4 (Thermosipho africanus (strain TCF52B)).